A 154-amino-acid polypeptide reads, in one-letter code: Transcriptional repressor NrdR (154 aa).

Residues 3–34 (CPFCRHPDSRVVDSRETDEGQAIRRRRSCPEC) fold into a zinc finger. The region spanning 46-136 (LAVVKRSGVT…VYRSFSSAED (91 aa)) is the ATP-cone domain.

Belongs to the NrdR family. It depends on Zn(2+) as a cofactor.

Functionally, negatively regulates transcription of bacterial ribonucleotide reductase nrd genes and operons by binding to NrdR-boxes. This Mycolicibacterium vanbaalenii (strain DSM 7251 / JCM 13017 / BCRC 16820 / KCTC 9966 / NRRL B-24157 / PYR-1) (Mycobacterium vanbaalenii) protein is Transcriptional repressor NrdR.